Here is a 936-residue protein sequence, read N- to C-terminus: Probable outer membrane protein pmp7 (936 aa).

The N-terminal stretch at 1-23 is a signal peptide; sequence MKSSVSWLFFSSIPLFSSLSIVA. In terms of domain architecture, Autotransporter spans 636–936; it reads GEPFERELWL…NTNLGSKFCF (301 aa).

It belongs to the PMP outer membrane protein family.

The protein resides in the secreted. It localises to the cell wall. Its subcellular location is the cell outer membrane. The sequence is that of Probable outer membrane protein pmp7 (pmp7) from Chlamydia pneumoniae (Chlamydophila pneumoniae).